The following is a 282-amino-acid chain: Parvulin-like PPIase (282 aa).

The N-terminal stretch at M1–C20 is a signal peptide. The region spanning K138–E231 is the PpiC domain.

The protein belongs to the PpiC/parvulin rotamase family.

It is found in the cell outer membrane. The catalysed reaction is [protein]-peptidylproline (omega=180) = [protein]-peptidylproline (omega=0). This chain is Parvulin-like PPIase (plp), found in Rickettsia typhi (strain ATCC VR-144 / Wilmington).